The following is a 560-amino-acid chain: Membrane protein insertase YidC (560 aa).

6 consecutive transmembrane segments (helical) span residues I5–F25, A334–F354, Y357–F377, L431–I451, L476–L496, and F522–W542.

This sequence belongs to the OXA1/ALB3/YidC family. Type 1 subfamily. As to quaternary structure, interacts with the Sec translocase complex via SecD. Specifically interacts with transmembrane segments of nascent integral membrane proteins during membrane integration.

It is found in the cell inner membrane. Required for the insertion and/or proper folding and/or complex formation of integral membrane proteins into the membrane. Involved in integration of membrane proteins that insert both dependently and independently of the Sec translocase complex, as well as at least some lipoproteins. Aids folding of multispanning membrane proteins. The protein is Membrane protein insertase YidC of Rickettsia rickettsii (strain Sheila Smith).